The chain runs to 495 residues: SH2 domain-containing adapter protein E (495 aa).

Disordered regions lie at residues 51 to 190, 203 to 233, and 256 to 327; these read TVSE…DKGK, DYAD…EPYD, and LLDS…EYEQ. Residue Ser107 is modified to Phosphoserine. Residues 135 to 144 show a composition bias toward polar residues; that stretch reads TKSSGCSTYI. Over residues 148 to 157 the composition is skewed to basic and acidic residues; the sequence is IKVDTQEKNG. Low complexity predominate over residues 162 to 181; the sequence is PSSSSSSSSSSSSASSSPSS. 2 stretches are compositionally biased toward basic and acidic residues: residues 208-224 and 301-327; these read YDAK…RVGE and PRAE…EYEQ. The SH2 domain occupies 395 to 490; the sequence is WYHGAISRAE…AEHMTLLYPV (96 aa).

The sequence is that of SH2 domain-containing adapter protein E (SHE) from Homo sapiens (Human).